Consider the following 464-residue polypeptide: Glucose-6-phosphate isomerase (464 aa).

Glu-290 acts as the Proton donor in catalysis. Residues His-319 and Lys-433 contribute to the active site.

It belongs to the GPI family.

Its subcellular location is the cytoplasm. It catalyses the reaction alpha-D-glucose 6-phosphate = beta-D-fructose 6-phosphate. Its pathway is carbohydrate biosynthesis; gluconeogenesis. It functions in the pathway carbohydrate degradation; glycolysis; D-glyceraldehyde 3-phosphate and glycerone phosphate from D-glucose: step 2/4. Functionally, catalyzes the reversible isomerization of glucose-6-phosphate to fructose-6-phosphate. The protein is Glucose-6-phosphate isomerase of Carboxydothermus hydrogenoformans (strain ATCC BAA-161 / DSM 6008 / Z-2901).